Consider the following 217-residue polypeptide: 3,4-dihydroxy-2-butanone 4-phosphate synthase (217 aa).

Residues 37–38, aspartate 42, 150–154, and glutamate 174 contribute to the D-ribulose 5-phosphate site; these read RE and RGGHT. Mg(2+) is bound at residue glutamate 38. Histidine 153 contacts Mg(2+).

This sequence belongs to the DHBP synthase family. Homodimer. Mg(2+) serves as cofactor. Mn(2+) is required as a cofactor.

It carries out the reaction D-ribulose 5-phosphate = (2S)-2-hydroxy-3-oxobutyl phosphate + formate + H(+). The protein operates within cofactor biosynthesis; riboflavin biosynthesis; 2-hydroxy-3-oxobutyl phosphate from D-ribulose 5-phosphate: step 1/1. In terms of biological role, catalyzes the conversion of D-ribulose 5-phosphate to formate and 3,4-dihydroxy-2-butanone 4-phosphate. The polypeptide is 3,4-dihydroxy-2-butanone 4-phosphate synthase (Sodalis glossinidius (strain morsitans)).